A 635-amino-acid chain; its full sequence is Threonine--tRNA ligase (635 aa).

The 61-residue stretch at 1–61 (MPIITLPDGN…EKDANIAIIT (61 aa)) folds into the TGS domain. The catalytic stretch occupies residues 242 to 533 (DHRKIGKQLD…LTEEYAGVYP (292 aa)). 3 residues coordinate Zn(2+): cysteine 333, histidine 384, and histidine 510.

It belongs to the class-II aminoacyl-tRNA synthetase family. As to quaternary structure, homodimer. Requires Zn(2+) as cofactor.

The protein localises to the cytoplasm. The enzyme catalyses tRNA(Thr) + L-threonine + ATP = L-threonyl-tRNA(Thr) + AMP + diphosphate + H(+). In terms of biological role, catalyzes the attachment of threonine to tRNA(Thr) in a two-step reaction: L-threonine is first activated by ATP to form Thr-AMP and then transferred to the acceptor end of tRNA(Thr). Also edits incorrectly charged L-seryl-tRNA(Thr). This Psychromonas ingrahamii (strain DSM 17664 / CCUG 51855 / 37) protein is Threonine--tRNA ligase.